Here is a 329-residue protein sequence, read N- to C-terminus: Thiamine thiazole synthase (329 aa).

Substrate contacts are provided by residues Cys86, 107-108 (EA), Gly115, and Val180. At Cys218 the chain carries 2,3-didehydroalanine (Cys). Substrate contacts are provided by residues Asp220, His235, Met287, and 297-299 (RMG).

The protein belongs to the THI4 family. As to quaternary structure, homooctamer. Fe cation is required as a cofactor. Post-translationally, during the catalytic reaction, a sulfide is transferred from Cys-218 to a reaction intermediate, generating a dehydroalanine residue.

It is found in the cytoplasm. The protein resides in the nucleus. It catalyses the reaction [ADP-thiazole synthase]-L-cysteine + glycine + NAD(+) = [ADP-thiazole synthase]-dehydroalanine + ADP-5-ethyl-4-methylthiazole-2-carboxylate + nicotinamide + 3 H2O + 2 H(+). Functionally, involved in biosynthesis of the thiamine precursor thiazole. Catalyzes the conversion of NAD and glycine to adenosine diphosphate 5-(2-hydroxyethyl)-4-methylthiazole-2-carboxylic acid (ADT), an adenylated thiazole intermediate. The reaction includes an iron-dependent sulfide transfer from a conserved cysteine residue of the protein to a thiazole intermediate. The enzyme can only undergo a single turnover, which suggests it is a suicide enzyme. May have additional roles in adaptation to various stress conditions and in DNA damage tolerance. The chain is Thiamine thiazole synthase from Phaeosphaeria nodorum (strain SN15 / ATCC MYA-4574 / FGSC 10173) (Glume blotch fungus).